Consider the following 271-residue polypeptide: Digeranylgeranylglyceryl phosphate synthase (271 aa).

A run of 8 helical transmembrane segments spans residues 11–31, 33–53, 88–108, 125–145, 149–169, 201–221, 224–244, and 251–271; these read INCAMAALGVVVGELIAGARL, VGAVLAPVVAAVVCAGGNAIN, FAVGVGMATVINRMCLAIAAL, LIGNVMVSYLVGSCFLFGAAV, PAPAVWLFLLAFLANLVREIL, VFAIALAVLTPLPYLDGVVGW, LVLALPAAAVILLASVLAVAG, and AQRVVKVGMLLGLLAFLASLL.

This sequence belongs to the UbiA prenyltransferase family. DGGGP synthase subfamily. Requires Mg(2+) as cofactor.

It localises to the cell membrane. It catalyses the reaction sn-3-O-(geranylgeranyl)glycerol 1-phosphate + (2E,6E,10E)-geranylgeranyl diphosphate = 2,3-bis-O-(geranylgeranyl)-sn-glycerol 1-phosphate + diphosphate. The protein operates within membrane lipid metabolism; glycerophospholipid metabolism. Its function is as follows. Prenyltransferase that catalyzes the transfer of the geranylgeranyl moiety of geranylgeranyl diphosphate (GGPP) to the C2 hydroxyl of (S)-3-O-geranylgeranylglyceryl phosphate (GGGP). This reaction is the second ether-bond-formation step in the biosynthesis of archaeal membrane lipids. The chain is Digeranylgeranylglyceryl phosphate synthase from Methanopyrus kandleri (strain AV19 / DSM 6324 / JCM 9639 / NBRC 100938).